A 326-amino-acid chain; its full sequence is Phosphate acyltransferase (326 aa).

Belongs to the PlsX family. In terms of assembly, homodimer. Probably interacts with PlsY.

Its subcellular location is the cytoplasm. It catalyses the reaction a fatty acyl-[ACP] + phosphate = an acyl phosphate + holo-[ACP]. It participates in lipid metabolism; phospholipid metabolism. Catalyzes the reversible formation of acyl-phosphate (acyl-PO(4)) from acyl-[acyl-carrier-protein] (acyl-ACP). This enzyme utilizes acyl-ACP as fatty acyl donor, but not acyl-CoA. The chain is Phosphate acyltransferase from Petrotoga mobilis (strain DSM 10674 / SJ95).